Reading from the N-terminus, the 141-residue chain is Nucleoside diphosphate kinase (141 aa).

The ATP site is built by K11, F59, R87, T93, R104, and N114. The active-site Pros-phosphohistidine intermediate is H117.

This sequence belongs to the NDK family. In terms of assembly, homotetramer. The cofactor is Mg(2+).

It localises to the cytoplasm. It catalyses the reaction a 2'-deoxyribonucleoside 5'-diphosphate + ATP = a 2'-deoxyribonucleoside 5'-triphosphate + ADP. It carries out the reaction a ribonucleoside 5'-diphosphate + ATP = a ribonucleoside 5'-triphosphate + ADP. Major role in the synthesis of nucleoside triphosphates other than ATP. The ATP gamma phosphate is transferred to the NDP beta phosphate via a ping-pong mechanism, using a phosphorylated active-site intermediate. The chain is Nucleoside diphosphate kinase from Burkholderia multivorans (strain ATCC 17616 / 249).